Consider the following 603-residue polypeptide: Arginine--tRNA ligase (603 aa).

The 'HIGH' region signature appears at 143-153 (PNIAKEMHVGH).

The protein belongs to the class-I aminoacyl-tRNA synthetase family. As to quaternary structure, monomer.

The protein resides in the cytoplasm. The catalysed reaction is tRNA(Arg) + L-arginine + ATP = L-arginyl-tRNA(Arg) + AMP + diphosphate. The polypeptide is Arginine--tRNA ligase (Prochlorococcus marinus (strain SARG / CCMP1375 / SS120)).